The chain runs to 753 residues: Nibrin (753 aa).

In terms of domain architecture, FHA spans tyrosine 22–leucine 81. 2 consecutive BRCT domains span residues serine 101 to glutamate 191 and glycine 221 to isoleucine 311. Serine 274 carries the phosphoserine modification. Serine 343 is modified (phosphoserine; by ATM). A disordered region spans residues arginine 442 to methionine 606. Residues proline 446–asparagine 455 are compositionally biased toward polar residues. The short motif at arginine 461–glutamate 467 is the Nuclear localization signal element. The span at cysteine 490–asparagine 500 shows a compositional bias: polar residues. The segment covering glutamate 517–isoleucine 528 has biased composition (basic and acidic residues). Positions glutamine 568 to glutamine 577 are enriched in polar residues. Over residues cysteine 585–methionine 606 the composition is skewed to basic and acidic residues. The short motif at alanine 739–asparagine 748 is the FxF/Y motif element.

This sequence belongs to the Nibrin family. In terms of assembly, component of the MRN complex composed of two heterodimers RAD50 and mre11 associated with a single NBN.

It is found in the nucleus. The protein localises to the chromosome. Its subcellular location is the PML body. The protein resides in the telomere. Component of the MRN complex, which plays a central role in double-strand break (DSB) repair, DNA recombination, maintenance of telomere integrity and meiosis. The MRN complex is involved in the repair of DNA double-strand breaks (DSBs) via homologous recombination (HR), an error-free mechanism which primarily occurs during S and G2 phases. The complex (1) mediates the end resection of damaged DNA, which generates proper single-stranded DNA, a key initial steps in HR, and is (2) required for the recruitment of other repair factors and efficient activation of ATM and ATR upon DNA damage. The MRN complex possesses single-strand endonuclease activity and double-strand-specific 3'-5' exonuclease activity, which are provided by MRE11, to initiate end resection, which is required for single-strand invasion and recombination. Within the MRN complex, NBN acts as a protein-protein adapter, which specifically recognizes and binds phosphorylated proteins, promoting their recruitment to DNA damage sites. Recruits MRE11 and RAD50 components of the MRN complex to DSBs in response to DNA damage. Promotes the recruitment of PI3/PI4-kinase family members ATM, ATR, and probably DNA-PKcs to the DNA damage sites, activating their functions. Mediates the recruitment of phosphorylated RBBP8/CtIP to DSBs, leading to cooperation between the MRN complex and RBBP8/CtIP to initiate end resection. The MRN complex and rbbp8/CtIP are also required for chromosome alignment during metaphase. This is Nibrin (NBN) from Gallus gallus (Chicken).